The following is a 96-amino-acid chain: Ribonuclease P protein component 1 (96 aa).

The protein belongs to the eukaryotic/archaeal RNase P protein component 1 family. As to quaternary structure, consists of a catalytic RNA component and at least 4-5 protein subunits.

The protein resides in the cytoplasm. The catalysed reaction is Endonucleolytic cleavage of RNA, removing 5'-extranucleotides from tRNA precursor.. Part of ribonuclease P, a protein complex that generates mature tRNA molecules by cleaving their 5'-ends. The chain is Ribonuclease P protein component 1 from Methanococcus aeolicus (strain ATCC BAA-1280 / DSM 17508 / OCM 812 / Nankai-3).